Here is a 138-residue protein sequence, read N- to C-terminus: Bis(5'-nucleosyl)-tetraphosphatase [asymmetrical] (138 aa).

In terms of domain architecture, Nudix hydrolase spans 1–132 (MVVKAAGLVI…EMGSLLRKFS (132 aa)). The Nudix box motif lies at 37–58 (GHVDPGEDEWQAAIRETKEEAN).

This sequence belongs to the Nudix hydrolase family. In terms of assembly, monomer. Requires Mg(2+) as cofactor. Co(2+) serves as cofactor. It depends on Mn(2+) as a cofactor. The cofactor is Zn(2+). Ca(2+) is required as a cofactor.

The catalysed reaction is P(1),P(4)-bis(5'-adenosyl) tetraphosphate + H2O = AMP + ATP + 2 H(+). Its function is as follows. Asymmetrically hydrolyzes Ap4A to yield AMP and ATP. The polypeptide is Bis(5'-nucleosyl)-tetraphosphatase [asymmetrical] (ndx-4) (Caenorhabditis elegans).